Consider the following 217-residue polypeptide: Uridine kinase (217 aa).

17-24 (GASASGKS) is a binding site for ATP.

The protein belongs to the uridine kinase family.

Its subcellular location is the cytoplasm. The enzyme catalyses uridine + ATP = UMP + ADP + H(+). The catalysed reaction is cytidine + ATP = CMP + ADP + H(+). The protein operates within pyrimidine metabolism; CTP biosynthesis via salvage pathway; CTP from cytidine: step 1/3. Its pathway is pyrimidine metabolism; UMP biosynthesis via salvage pathway; UMP from uridine: step 1/1. The protein is Uridine kinase of Haemophilus ducreyi (strain 35000HP / ATCC 700724).